The sequence spans 245 residues: 1-(5-phosphoribosyl)-5-[(5-phosphoribosylamino)methylideneamino] imidazole-4-carboxamide isomerase (245 aa).

Asp-8 serves as the catalytic Proton acceptor. Asp-129 serves as the catalytic Proton donor.

This sequence belongs to the HisA/HisF family.

The protein resides in the cytoplasm. The enzyme catalyses 1-(5-phospho-beta-D-ribosyl)-5-[(5-phospho-beta-D-ribosylamino)methylideneamino]imidazole-4-carboxamide = 5-[(5-phospho-1-deoxy-D-ribulos-1-ylimino)methylamino]-1-(5-phospho-beta-D-ribosyl)imidazole-4-carboxamide. It participates in amino-acid biosynthesis; L-histidine biosynthesis; L-histidine from 5-phospho-alpha-D-ribose 1-diphosphate: step 4/9. This is 1-(5-phosphoribosyl)-5-[(5-phosphoribosylamino)methylideneamino] imidazole-4-carboxamide isomerase from Trichlorobacter lovleyi (strain ATCC BAA-1151 / DSM 17278 / SZ) (Geobacter lovleyi).